We begin with the raw amino-acid sequence, 407 residues long: Peptidase T (407 aa).

His77 is a binding site for Zn(2+). Asp79 is an active-site residue. Asp138 contributes to the Zn(2+) binding site. The active-site Proton acceptor is Glu172. 3 residues coordinate Zn(2+): Glu173, Asp195, and His377.

Belongs to the peptidase M20B family. Zn(2+) is required as a cofactor.

The protein resides in the cytoplasm. The enzyme catalyses Release of the N-terminal residue from a tripeptide.. Functionally, cleaves the N-terminal amino acid of tripeptides. The polypeptide is Peptidase T (Aeromonas salmonicida (strain A449)).